Reading from the N-terminus, the 193-residue chain is dCTP deaminase (193 aa).

Residues 110-115 (RSSLAR), Asp-128, 136-138 (VLE), Tyr-171, Lys-178, and Gln-182 each bind dCTP. Glu-138 functions as the Proton donor/acceptor in the catalytic mechanism. The interval 169–193 (RPYNRRQDAKYRDQQGAVASRIDKD) is disordered.

This sequence belongs to the dCTP deaminase family. Homotrimer.

The enzyme catalyses dCTP + H2O + H(+) = dUTP + NH4(+). It participates in pyrimidine metabolism; dUMP biosynthesis; dUMP from dCTP (dUTP route): step 1/2. Catalyzes the deamination of dCTP to dUTP. The protein is dCTP deaminase of Salmonella paratyphi B (strain ATCC BAA-1250 / SPB7).